The chain runs to 405 residues: MKRTIIMMLDSFGVGAAHDAEAFGDVGSNTFGHIAKACAEGKANDGREGPLKLPNLARLGLGHASKESTGEFPAGFGDDVEVIGAYGHADELSSGKDTPSGHWEMAGVPVLYEWGYFSELTNSFPQALTDKILARAGLTEFLGNCHSSGTVILDELGEEHMRTGKPIFYTSADSVFQIACHEESFGLEKLYELCIIAREELADYNIGRVIARPFVGTGPGSFERTGNRRDYAVEPPAPTVLDKLKAAGGEVVSVGKIADIYAHCGITKKVKATGLEALFDATLEQVKLAGDNTIVFTNFVDFDSHYGHRRDVAGYARSLEYFDSRLPEILALLDEDDFLLLTADHGCDPTWPGSDHTRERVPVLAYGAGLEAGSLGLRSSFADMGQSIASYFKLEPMEYGESFIR.

Aspartate 10, aspartate 303, histidine 308, aspartate 344, histidine 345, and histidine 356 together coordinate Mn(2+).

It belongs to the phosphopentomutase family. Mn(2+) serves as cofactor.

The protein resides in the cytoplasm. It carries out the reaction 2-deoxy-alpha-D-ribose 1-phosphate = 2-deoxy-D-ribose 5-phosphate. The enzyme catalyses alpha-D-ribose 1-phosphate = D-ribose 5-phosphate. Its pathway is carbohydrate degradation; 2-deoxy-D-ribose 1-phosphate degradation; D-glyceraldehyde 3-phosphate and acetaldehyde from 2-deoxy-alpha-D-ribose 1-phosphate: step 1/2. Functionally, isomerase that catalyzes the conversion of deoxy-ribose 1-phosphate (dRib-1-P) and ribose 1-phosphate (Rib-1-P) to deoxy-ribose 5-phosphate (dRib-5-P) and ribose 5-phosphate (Rib-5-P), respectively. This is Phosphopentomutase from Shewanella pealeana (strain ATCC 700345 / ANG-SQ1).